Reading from the N-terminus, the 147-residue chain is D-aminoacyl-tRNA deacylase (147 aa).

Positions 136–137 (GP) match the Gly-cisPro motif, important for rejection of L-amino acids motif.

Belongs to the DTD family. Homodimer.

Its subcellular location is the cytoplasm. It carries out the reaction glycyl-tRNA(Ala) + H2O = tRNA(Ala) + glycine + H(+). The catalysed reaction is a D-aminoacyl-tRNA + H2O = a tRNA + a D-alpha-amino acid + H(+). In terms of biological role, an aminoacyl-tRNA editing enzyme that deacylates mischarged D-aminoacyl-tRNAs. Also deacylates mischarged glycyl-tRNA(Ala), protecting cells against glycine mischarging by AlaRS. Acts via tRNA-based rather than protein-based catalysis; rejects L-amino acids rather than detecting D-amino acids in the active site. By recycling D-aminoacyl-tRNA to D-amino acids and free tRNA molecules, this enzyme counteracts the toxicity associated with the formation of D-aminoacyl-tRNA entities in vivo and helps enforce protein L-homochirality. In Streptococcus pyogenes serotype M6 (strain ATCC BAA-946 / MGAS10394), this protein is D-aminoacyl-tRNA deacylase.